Consider the following 449-residue polypeptide: Packaging protein 1 (449 aa).

The disordered stretch occupies residues 1 to 77 (METRGRRPAA…QPAKRGDMLD (77 aa)). Position 171–178 (171–178 (GPTGCGKS)) interacts with ATP. The DNA-binding stretch occupies residues 440–449 (RAYRARKTPK).

The protein belongs to the adenoviridae packaging protein 1 family. Homodimer. Part of a genome packaging complex composed of packaging proteins 1, 2 and 3; this complex specifically binds to the packaging sequence on the left end of viral genomic DNA and performs packaging of the viral genome. Interacts with protein 33K.

It localises to the virion. Its subcellular location is the host nucleus. The protein localises to the host nucleoplasm. It is found in the host nucleolus. In terms of biological role, component of the packaging machinery which encapsidates the viral DNA into preformed capsids and transcriptional activator of the viral major late promoter (MLP). Binds, along with packaging proteins 2 and 3, to the specific packaging sequence on the left end of viral genomic DNA and displays ATPase activity thereby providing the power stroke of the packaging machinery. The activity of packaging protein IVa2 is stimulated by protein 33K which acts as a terminase. May be the protein that pumps DNA into the capsid powered by ATP hydrolysis. Specifically binds to the 5'-CG-3' nucleotides of the repeats making up the packaging sequence. Component of the DEF-A and DEF-B transcription factors that bind downstream elements of the major late promoter (MLP), and stimulate transcription from the MLP after initiation of viral DNA replication. DEF-A is a heterodimer packaging proteins 1 and 2 and DEF-B is a homodimer of packaging protein 1. The polypeptide is Packaging protein 1 (Homo sapiens (Human)).